The following is a 336-amino-acid chain: Peroxidase 20 (336 aa).

Positions Met-1–Gly-24 are cleaved as a signal peptide. Disulfide bonds link Cys-39/Cys-119, Cys-72/Cys-77, Cys-125/Cys-331, and Cys-204/Cys-239. The Proton acceptor role is filled by His-70. Residues Asp-71, Val-74, Gly-76, Asp-78, and Ser-80 each contribute to the Ca(2+) site. A substrate-binding site is contributed by Pro-167. N-linked (GlcNAc...) asparagine glycosylation is present at Asn-170. His-197 serves as a coordination point for heme b. Residue Thr-198 coordinates Ca(2+). Ca(2+) contacts are provided by Asp-252, Thr-255, and Asp-260.

The protein belongs to the peroxidase family. Classical plant (class III) peroxidase subfamily. It depends on heme b as a cofactor. Ca(2+) is required as a cofactor.

Its subcellular location is the secreted. It catalyses the reaction 2 a phenolic donor + H2O2 = 2 a phenolic radical donor + 2 H2O. Its function is as follows. Removal of H(2)O(2), oxidation of toxic reductants, biosynthesis and degradation of lignin, suberization, auxin catabolism, response to environmental stresses such as wounding, pathogen attack and oxidative stress. These functions might be dependent on each isozyme/isoform in each plant tissue. May be implicated in the systemic acquired resistance response via the salicylic acid signal transduction pathway. This is Peroxidase 20 (PER20) from Arabidopsis thaliana (Mouse-ear cress).